A 333-amino-acid polypeptide reads, in one-letter code: Eukaryotic translation initiation factor 2 subunit 2 (333 aa).

2 disordered regions span residues 1-120 (MSGD…LDIM) and 139-165 (ILEK…QTGP). Ser-2 bears the N-acetylserine mark. Position 2 is a phosphoserine (Ser-2). Ser-13 carries the post-translational modification Phosphoserine; by PKC; in vitro. Over residues 13-22 (SKKKKKKKKP) the composition is skewed to basic residues. Thr-36 is subject to Phosphothreonine. Basic and acidic residues predominate over residues 40–51 (ETKEVEPEPTED). Ser-67 bears the Phosphoserine; by CK2 mark. The segment covering 96 to 105 (EGVKDLKIEN) has biased composition (basic and acidic residues). A Glycyl lysine isopeptide (Lys-Gly) (interchain with G-Cter in SUMO2) cross-link involves residue Lys-102. Composition is skewed to acidic residues over residues 106 to 118 (DVQE…DDLD) and 139 to 149 (ILEKDEALEDE). The residue at position 158 (Ser-158) is a Phosphoserine. Ser-218 is modified (phosphoserine; by PKA; in vitro). Lys-265 and Lys-293 each carry N6-acetyllysine. The segment at 281-305 (CHTCRSPDTILQKDTRLYFLQCETC) adopts a C4-type zinc-finger fold.

Belongs to the eIF-2-beta/eIF-5 family. In terms of assembly, eukaryotic translation initiation factor 2 eIF2 is a heterotrimeric complex composed of an alpha (EIF2S1), a beta (EIF2S2) and a gamma (EIF2S3) chain. eIF2 is member of the 43S pre-initiation complex (43S PIC). eIF2 forms a complex with at least CELF1/CUGBP1, CALR, CALR3, EIF2S1, EIF2S2, HSP90B1 and HSPA5. Interacts with BZW2/5MP1. Interacts with EIF5. The N-terminus is blocked.

Its subcellular location is the cytoplasm. It is found in the cytosol. Functionally, component of the eIF2 complex that functions in the early steps of protein synthesis by forming a ternary complex with GTP and initiator tRNA. This complex binds to a 40S ribosomal subunit, followed by mRNA binding to form the 43S pre-initiation complex (43S PIC). Junction of the 60S ribosomal subunit to form the 80S initiation complex is preceded by hydrolysis of the GTP bound to eIF2 and release of an eIF2-GDP binary complex. In order for eIF2 to recycle and catalyze another round of initiation, the GDP bound to eIF2 must exchange with GTP by way of a reaction catalyzed by eIF2B. The sequence is that of Eukaryotic translation initiation factor 2 subunit 2 (EIF2S2) from Oryctolagus cuniculus (Rabbit).